The chain runs to 262 residues: MGRVSTEALPSGLLNWVAVWRRNFLAWKKVAPASLLGNLADPMIYIFGLGSGLGVMLGNVGGVSYSAFLAAGMVATSAMTASTFETIYATFARMRDHRTWEAMLYTKLTLGDIVLGEMAWAATKASLAGTAIGIVTATLAYSEWDSLIYVFPVIALTGLAFASLSMVVAALAPSYDYLVFYQSLVITPMLVLSGSVFPVEQLSPMLQRITHLLPLAHSIDLIRPAMLGHPVPDITLHLGALCLYIVLPFFVSIALLRRRLTQ.

An ABC transmembrane type-2 domain is found at 33–259 (ASLLGNLADP…FVSIALLRRR (227 aa)). A run of 6 helical transmembrane segments spans residues 43-63 (MIYIFGLGSGLGVMLGNVGGV), 67-87 (AFLAAGMVATSAMTASTFETI), 119-139 (AWAATKASLAGTAIGIVTATL), 148-168 (IYVFPVIALTGLAFASLSMVV), 177-197 (YLVFYQSLVITPMLVLSGSVF), and 236-256 (LHLGALCLYIVLPFFVSIALL).

It belongs to the ABC-2 integral membrane protein family. Lipooligosaccharide exporter (TC 3.A.1.102) subfamily. As to quaternary structure, the complex is composed of two ATP-binding proteins (NodI) and two transmembrane proteins (NodJ).

Its subcellular location is the cell inner membrane. Part of the ABC transporter complex NodIJ involved in the export of the nodulation factors (Nod factors), the bacterial signal molecules that induce symbiosis and subsequent nodulation induction. Nod factors are LCO (lipo-chitin oligosaccharide), a modified beta-1,4-linked N-acetylglucosamine oligosaccharide. This subunit encodes the transporter. The chain is Nodulation protein J (nodJ) from Neorhizobium galegae (Rhizobium galegae).